Reading from the N-terminus, the 252-residue chain is MVSFTKTFFAIVACALGVQAHGYVDTLNVGGTQYTGYLPYNDPYTTPAPQRIERPIPGNGPVTALTTIDVQCNGENGGGSSPAPLVATIAAGGKIAFHWTTWPSSHVGPVITYLGKVPSSTDVTKYSPTGSDVIWFKIDEGGYSNGKWAATDVLSAQNSTWTVTIPSSLAPGQYIVRHEIIALHQAQTYPGAQSYPDCFQIRVTGSGNKTPSGSYLVSFPGAYTATTPGIAFNVYTNFTSYPIPGPAVWTGN.

The N-terminal stretch at 1-20 (MVSFTKTFFAIVACALGVQA) is a signal peptide. Cu(2+)-binding residues include His21 and His106. Cys72 and Cys198 are disulfide-bonded. Asn158 is a glycosylation site (N-linked (GlcNAc...) asparagine). Residues His184 and Gln193 each contribute to the O2 site. Position 195 (Tyr195) interacts with Cu(2+). A glycan (N-linked (GlcNAc...) asparagine) is linked at Asn237.

The protein belongs to the polysaccharide monooxygenase AA9 family. Cu(2+) is required as a cofactor.

Its subcellular location is the secreted. The enzyme catalyses [(1-&gt;4)-beta-D-glucosyl]n+m + reduced acceptor + O2 = 4-dehydro-beta-D-glucosyl-[(1-&gt;4)-beta-D-glucosyl]n-1 + [(1-&gt;4)-beta-D-glucosyl]m + acceptor + H2O.. Functionally, lytic polysaccharide monooxygenase (LPMO) that depolymerizes crystalline and amorphous polysaccharides via the oxidation of scissile alpha- or beta-(1-4)-glycosidic bonds, yielding C1 or C4 oxidation products. Catalysis by LPMOs requires the reduction of the active-site copper from Cu(II) to Cu(I) by a reducing agent and H(2)O(2) or O(2) as a cosubstrate. The synergistic activity of LPMO9B with xylanase Xyl10G or cellulase Cel5B shows efficient bioconversion rates of 56 and 174 percent in pretreated kenaf (Hibiscus cannabinus) and oak, respectively. In Gloeophyllum trabeum (strain ATCC 11539 / FP-39264 / Madison 617) (Brown rot fungus), this protein is AA9 family lytic polysaccharide monooxygenase B.